We begin with the raw amino-acid sequence, 320 residues long: Putative olfactory receptor 2W5 pseudogene (320 aa).

N-linked (GlcNAc...) asparagine glycosylation occurs at Asn-5. 4 consecutive transmembrane segments (helical) span residues Val-30–Val-50, Pro-58–Ala-78, Val-98–Met-118, and Leu-140–Cys-160. A disulfide bridge connects residues Cys-97 and Cys-179. The segment at Leu-267–Leu-320 is disordered. Over residues Leu-290–Thr-304 the composition is skewed to basic and acidic residues.

Belongs to the G-protein coupled receptor 1 family.

The protein localises to the cell membrane. Odorant receptor. The polypeptide is Putative olfactory receptor 2W5 pseudogene (Homo sapiens (Human)).